Consider the following 264-residue polypeptide: Small ribosomal subunit protein eS1 (264 aa).

At lysine 34 the chain carries N6-acetyllysine; alternate. Lysine 34 is covalently cross-linked (Glycyl lysine isopeptide (Lys-Gly) (interchain with G-Cter in SUMO2); alternate). N6-acetyllysine is present on lysine 56. Tyrosine 155 bears the ADP-ribosyltyrosine mark. The segment at histidine 232–valine 264 is disordered. At serine 237 the chain carries Phosphoserine. Residues threonine 242–glycine 255 are compositionally biased toward basic and acidic residues. Lysine 249 bears the N6-acetyllysine; alternate mark. Lysine 249 is covalently cross-linked (Glycyl lysine isopeptide (Lys-Gly) (interchain with G-Cter in SUMO2); alternate). Phosphotyrosine is present on tyrosine 256. Phosphoserine is present on serine 263.

Belongs to the eukaryotic ribosomal protein eS1 family. As to quaternary structure, component of the small ribosomal subunit. Mature ribosomes consist of a small (40S) and a large (60S) subunit. The 40S subunit contains about 33 different proteins and 1 molecule of RNA (18S). The 60S subunit contains about 49 different proteins and 3 molecules of RNA (28S, 5.8S and 5S). Identified in a IGF2BP1-dependent mRNP granule complex containing untranslated mRNAs. Binds with high affinity to IPO4. Interacts with DDIT3. Part of the small subunit (SSU) processome, composed of more than 70 proteins and the RNA chaperone small nucleolar RNA (snoRNA) U3. The protein designated S3b has the same amino acid sequence as S3a except that it lacks the C-terminal 12 residues. It is probable that S3a is converted by proteolysis, either physiologically or fortuitously, to S3b. In terms of processing, ADP-ribosylated at Tyr-155 by PARP1 in presence of HPF1.

The protein localises to the cytoplasm. It localises to the nucleus. The protein resides in the nucleolus. Its function is as follows. Component of the small ribosomal subunit. The ribosome is a large ribonucleoprotein complex responsible for the synthesis of proteins in the cell. Part of the small subunit (SSU) processome, first precursor of the small eukaryotic ribosomal subunit. During the assembly of the SSU processome in the nucleolus, many ribosome biogenesis factors, an RNA chaperone and ribosomal proteins associate with the nascent pre-rRNA and work in concert to generate RNA folding, modifications, rearrangements and cleavage as well as targeted degradation of pre-ribosomal RNA by the RNA exosome. May play a role during erythropoiesis through regulation of transcription factor DDIT3. The protein is Small ribosomal subunit protein eS1 (Rps3a) of Rattus norvegicus (Rat).